Here is a 67-residue protein sequence, read N- to C-terminus: Small, acid-soluble spore protein 2 (67 aa).

It belongs to the alpha/beta-type SASP family.

Functionally, SASP are bound to spore DNA. They are double-stranded DNA-binding proteins that cause DNA to change to an a-like conformation. They protect the DNA backbone from chemical and enzymatic cleavage and are thus involved in dormant spore's high resistance to UV light. This chain is Small, acid-soluble spore protein 2 (Su-2), found in Sporosarcina ureae.